A 202-amino-acid polypeptide reads, in one-letter code: FMN-dependent NADH:quinone oxidoreductase 2 (202 aa).

FMN is bound by residues serine 9, 15–17 (SVS), 93–96 (MYNF), and 137–140 (SRGG).

This sequence belongs to the azoreductase type 1 family. In terms of assembly, homodimer. FMN serves as cofactor.

It carries out the reaction 2 a quinone + NADH + H(+) = 2 a 1,4-benzosemiquinone + NAD(+). The enzyme catalyses N,N-dimethyl-1,4-phenylenediamine + anthranilate + 2 NAD(+) = 2-(4-dimethylaminophenyl)diazenylbenzoate + 2 NADH + 2 H(+). Its function is as follows. Quinone reductase that provides resistance to thiol-specific stress caused by electrophilic quinones. Also exhibits azoreductase activity. Catalyzes the reductive cleavage of the azo bond in aromatic azo compounds to the corresponding amines. The protein is FMN-dependent NADH:quinone oxidoreductase 2 of Bradyrhizobium diazoefficiens (strain JCM 10833 / BCRC 13528 / IAM 13628 / NBRC 14792 / USDA 110).